The primary structure comprises 1443 residues: ARF guanine-nucleotide exchange factor GNL1 (1443 aa).

The 190-residue stretch at 554–743 folds into the SEC7 domain; it reads FVRKVKHIKK…SEIYHSIRHS (190 aa). Residue glutamate 658 is part of the active site. 2 disordered regions span residues 917–949 and 1424–1443; these read DDPE…AMPR and DQFQ…GNEV. Residues 939 to 949 are compositionally biased toward polar residues; the sequence is VSQSQPSAMPR. Basic and acidic residues predominate over residues 1425-1435; sequence QFQRRNAKPED.

As to quaternary structure, homodimer.

Its subcellular location is the cytoplasm. It localises to the cytosol. The protein resides in the golgi apparatus membrane. Activates the ARF proteins by exchanging bound GDP for free GTP. Plays a role in vesicular protein sorting. Acts as the major regulator of retrograde Golgi to endoplasmic reticulum trafficking but is also involved in the endocytosis process. Could function redundantly with GNOM. Regulates vesicle trafficking required for the coordinated polar localization of auxin efflux carriers which in turn determines the direction of auxin flow. Mediates the endocytosis of PIN2 from plasma membrane to endosomal compartments. Required for maintenance of endoplasmic reticulum morphology. This Arabidopsis thaliana (Mouse-ear cress) protein is ARF guanine-nucleotide exchange factor GNL1 (GNL1).